The following is a 427-amino-acid chain: Enolase (427 aa).

(2R)-2-phosphoglycerate is bound at residue Gln163. Glu205 functions as the Proton donor in the catalytic mechanism. Residues Asp242, Glu285, and Asp312 each contribute to the Mg(2+) site. Positions 337, 366, 367, and 388 each coordinate (2R)-2-phosphoglycerate. Residue Lys337 is the Proton acceptor of the active site.

The protein belongs to the enolase family. Mg(2+) is required as a cofactor.

The protein localises to the cytoplasm. It localises to the secreted. Its subcellular location is the cell surface. It carries out the reaction (2R)-2-phosphoglycerate = phosphoenolpyruvate + H2O. It functions in the pathway carbohydrate degradation; glycolysis; pyruvate from D-glyceraldehyde 3-phosphate: step 4/5. In terms of biological role, catalyzes the reversible conversion of 2-phosphoglycerate (2-PG) into phosphoenolpyruvate (PEP). It is essential for the degradation of carbohydrates via glycolysis. The sequence is that of Enolase from Albidiferax ferrireducens (strain ATCC BAA-621 / DSM 15236 / T118) (Rhodoferax ferrireducens).